Consider the following 136-residue polypeptide: Large ribosomal subunit protein uL22 (136 aa).

Belongs to the universal ribosomal protein uL22 family. Part of the 50S ribosomal subunit.

This protein binds specifically to 23S rRNA; its binding is stimulated by other ribosomal proteins, e.g. L4, L17, and L20. It is important during the early stages of 50S assembly. It makes multiple contacts with different domains of the 23S rRNA in the assembled 50S subunit and ribosome. Functionally, the globular domain of the protein is located near the polypeptide exit tunnel on the outside of the subunit, while an extended beta-hairpin is found that lines the wall of the exit tunnel in the center of the 70S ribosome. This Leifsonia xyli subsp. xyli (strain CTCB07) protein is Large ribosomal subunit protein uL22.